We begin with the raw amino-acid sequence, 71 residues long: Exodeoxyribonuclease 7 small subunit (71 aa).

This sequence belongs to the XseB family. In terms of assembly, heterooligomer composed of large and small subunits.

Its subcellular location is the cytoplasm. The catalysed reaction is Exonucleolytic cleavage in either 5'- to 3'- or 3'- to 5'-direction to yield nucleoside 5'-phosphates.. Its function is as follows. Bidirectionally degrades single-stranded DNA into large acid-insoluble oligonucleotides, which are then degraded further into small acid-soluble oligonucleotides. The protein is Exodeoxyribonuclease 7 small subunit of Clostridium botulinum (strain 657 / Type Ba4).